We begin with the raw amino-acid sequence, 436 residues long: GTPase Der (436 aa).

EngA-type G domains lie at 4-167 and 175-351; these read PTVA…PVEE and IRFS…ESQN. Residues 10 to 17, 57 to 61, 119 to 122, 181 to 188, 229 to 233, and 294 to 297 contribute to the GTP site; these read GRPNVGKS, DTGGI, NKVD, DTAGM, and NKWD. The KH-like domain maps to 352 to 436; it reads KRIPSAVLND…PINLIARKRK (85 aa).

This sequence belongs to the TRAFAC class TrmE-Era-EngA-EngB-Septin-like GTPase superfamily. EngA (Der) GTPase family. In terms of assembly, associates with the 50S ribosomal subunit.

GTPase that plays an essential role in the late steps of ribosome biogenesis. In Streptococcus agalactiae serotype Ia (strain ATCC 27591 / A909 / CDC SS700), this protein is GTPase Der.